Consider the following 390-residue polypeptide: Chorismate synthase 2 (390 aa).

Positions 39 and 45 each coordinate NADP(+). FMN-binding positions include 132 to 134, 253 to 254, glycine 298, 313 to 317, and arginine 339; these read RSS, NA, and KPIPT.

Belongs to the chorismate synthase family. In terms of assembly, homotetramer. It depends on FMNH2 as a cofactor.

It catalyses the reaction 5-O-(1-carboxyvinyl)-3-phosphoshikimate = chorismate + phosphate. Its pathway is metabolic intermediate biosynthesis; chorismate biosynthesis; chorismate from D-erythrose 4-phosphate and phosphoenolpyruvate: step 7/7. Functionally, catalyzes the anti-1,4-elimination of the C-3 phosphate and the C-6 proR hydrogen from 5-enolpyruvylshikimate-3-phosphate (EPSP) to yield chorismate, which is the branch point compound that serves as the starting substrate for the three terminal pathways of aromatic amino acid biosynthesis. This reaction introduces a second double bond into the aromatic ring system. The sequence is that of Chorismate synthase 2 from Bacillus thuringiensis subsp. konkukian (strain 97-27).